The primary structure comprises 447 residues: uncharacterized protein (447 aa).

3 helical membrane-spanning segments follow: residues I28–V48, I241–I261, and P397–F417.

The protein localises to the membrane. This is an uncharacterized protein from Schizosaccharomyces pombe (strain 972 / ATCC 24843) (Fission yeast).